The chain runs to 207 residues: Peptidyl-prolyl cis-trans isomerase FKBP16-1, chloroplastic (207 aa).

One can recognise a PPIase FKBP-type domain in the interval glycine 104 to leucine 207.

Belongs to the FKBP-type PPIase family.

It localises to the plastid. Its subcellular location is the chloroplast thylakoid lumen. It carries out the reaction [protein]-peptidylproline (omega=180) = [protein]-peptidylproline (omega=0). PPIases accelerate the folding of proteins. It catalyzes the cis-trans isomerization of proline imidic peptide bonds in oligopeptides. This chain is Peptidyl-prolyl cis-trans isomerase FKBP16-1, chloroplastic (FKBP16-1), found in Arabidopsis thaliana (Mouse-ear cress).